We begin with the raw amino-acid sequence, 103 residues long: Large ribosomal subunit protein uL24 (103 aa).

This sequence belongs to the universal ribosomal protein uL24 family. In terms of assembly, part of the 50S ribosomal subunit.

One of two assembly initiator proteins, it binds directly to the 5'-end of the 23S rRNA, where it nucleates assembly of the 50S subunit. In terms of biological role, one of the proteins that surrounds the polypeptide exit tunnel on the outside of the subunit. The sequence is that of Large ribosomal subunit protein uL24 from Geobacillus sp. (strain WCH70).